We begin with the raw amino-acid sequence, 170 residues long: tRNA-splicing endonuclease (170 aa).

Catalysis depends on residues tyrosine 106, histidine 116, and lysine 147.

The protein belongs to the tRNA-intron endonuclease family. Archaeal short subfamily. Homotetramer; although the tetramer contains four active sites, only two participate in the cleavage. Therefore, it should be considered as a dimer of dimers.

The enzyme catalyses pretRNA = a 3'-half-tRNA molecule with a 5'-OH end + a 5'-half-tRNA molecule with a 2',3'-cyclic phosphate end + an intron with a 2',3'-cyclic phosphate and a 5'-hydroxyl terminus.. Endonuclease that removes tRNA introns. Cleaves pre-tRNA at the 5'- and 3'-splice sites to release the intron. The products are an intron and two tRNA half-molecules bearing 2',3' cyclic phosphate and 5'-OH termini. Recognizes a pseudosymmetric substrate in which 2 bulged loops of 3 bases are separated by a stem of 4 bp. This Methanothermobacter thermautotrophicus (strain ATCC 29096 / DSM 1053 / JCM 10044 / NBRC 100330 / Delta H) (Methanobacterium thermoautotrophicum) protein is tRNA-splicing endonuclease.